A 305-amino-acid chain; its full sequence is Tetraspanin-12 (305 aa).

Residues 1–12 lie on the Cytoplasmic side of the membrane; sequence MAREDSVKCLRC. Residues C9 and C12 are each lipidated (S-palmitoyl cysteine). Residues 13–33 form a helical membrane-spanning segment; that stretch reads LLYALNLLFWLMSISVLAVSA. The Extracellular portion of the chain corresponds to 34–59; sequence WMRDYLNNVLTLTAETRVEEAVILTY. A helical membrane pass occupies residues 60-80; the sequence is FPVVHPVMIAVCCFLIIVGML. The Cytoplasmic segment spans residues 81–89; that stretch reads GYCGTVKRN. The S-palmitoyl cysteine moiety is linked to residue C83. Residues 90–110 traverse the membrane as a helical segment; that stretch reads LLLLAWYFGSLLVIFCVELAC. Over 111–224 the chain is Extracellular; the sequence is GVWTYEQELM…RGTKQLQVLR (114 aa). A helical membrane pass occupies residues 225-245; it reads FLGISIGVTQILAMILTITLL. Over 246-305 the chain is Cytoplasmic; sequence WALYYDRREPGTDQMMSLKNDNSQHLSCPSVELLKPSLSRIFEHTSMANSFNTHFEMEEL.

It belongs to the tetraspanin (TM4SF) family. Component of a complex, at least composed of TSPAN12, FZD4 and norrin (NDP). Interacts (when palmitoylated) with ADAM10. Interacts with MMP14/MT1-MMP. Palmitoylated; required for interaction with ADAM10. The precise position of palmitoylated residues is unclear and occurs either on Cys-9, Cys-12 and/or Cys-83.

It is found in the cell membrane. Its function is as follows. Regulator of cell surface receptor signal transduction. Plays a central role in retinal vascularization by regulating norrin (NDP) signal transduction. Acts in concert with norrin (NDP) to promote FZD4 multimerization and subsequent activation of FZD4, leading to promote accumulation of beta-catenin (CTNNB1) and stimulate LEF/TCF-mediated transcriptional programs. Suprisingly, it only activates the norrin (NDP)-dependent activation of FZD4, while it does not activate the Wnt-dependent activation of FZD4, suggesting the existence of a Wnt-independent signaling that also promote accumulation the beta-catenin (CTNNB1). Acts as a regulator of membrane proteinases such as ADAM10 and MMP14/MT1-MMP. Activates ADAM10-dependent cleavage activity of amyloid precursor protein (APP). Activates MMP14/MT1-MMP-dependent cleavage activity. This is Tetraspanin-12 (TSPAN12) from Homo sapiens (Human).